Consider the following 484-residue polypeptide: UDP-N-acetylmuramate--L-alanine ligase (484 aa).

123 to 129 is a binding site for ATP; that stretch reads GTHGKTT.

It belongs to the MurCDEF family.

It localises to the cytoplasm. It catalyses the reaction UDP-N-acetyl-alpha-D-muramate + L-alanine + ATP = UDP-N-acetyl-alpha-D-muramoyl-L-alanine + ADP + phosphate + H(+). The protein operates within cell wall biogenesis; peptidoglycan biosynthesis. Functionally, cell wall formation. In Pseudomonas fluorescens (strain ATCC BAA-477 / NRRL B-23932 / Pf-5), this protein is UDP-N-acetylmuramate--L-alanine ligase.